A 65-amino-acid polypeptide reads, in one-letter code: Large ribosomal subunit protein bL35 (65 aa).

This sequence belongs to the bacterial ribosomal protein bL35 family.

The sequence is that of Large ribosomal subunit protein bL35 from Parasynechococcus marenigrum (strain WH8102).